The following is a 297-amino-acid chain: N-acetylmuramic acid 6-phosphate etherase (297 aa).

The region spanning A55–K218 is the SIS domain. E83 serves as the catalytic Proton donor. E114 is a catalytic residue.

It belongs to the GCKR-like family. MurNAc-6-P etherase subfamily. As to quaternary structure, homodimer.

It catalyses the reaction N-acetyl-D-muramate 6-phosphate + H2O = N-acetyl-D-glucosamine 6-phosphate + (R)-lactate. Its pathway is amino-sugar metabolism; N-acetylmuramate degradation. In terms of biological role, specifically catalyzes the cleavage of the D-lactyl ether substituent of MurNAc 6-phosphate, producing GlcNAc 6-phosphate and D-lactate. This chain is N-acetylmuramic acid 6-phosphate etherase, found in Lactobacillus gasseri (strain ATCC 33323 / DSM 20243 / BCRC 14619 / CIP 102991 / JCM 1131 / KCTC 3163 / NCIMB 11718 / NCTC 13722 / AM63).